The sequence spans 166 residues: Phospholipase A2 inhibitor (166 aa).

Positions 1–19 are cleaved as a signal peptide; it reads MRLILLSGLLLLGIFLANG. In terms of domain architecture, C-type lectin spans 46–161; the sequence is LRGAFLTVYK…CDDNLLVVCE (116 aa). Asparagine 61 and asparagine 122 each carry an N-linked (GlcNAc...) asparagine glycan. Intrachain disulfides connect cysteine 83–cysteine 160 and cysteine 138–cysteine 152.

This sequence belongs to the alpha-type phospholipase A2 inhibitor family. Homotrimer; non-covalently linked. As to expression, expressed by the liver.

It is found in the secreted. Functionally, this phospholipase A2 inhibitor binds directly phospholipase A2 in the presence or absence of calcium. This is Phospholipase A2 inhibitor from Bothrops alternatus (Urutu).